Here is a 159-residue protein sequence, read N- to C-terminus: Probable cyclic pyranopterin monophosphate synthase accessory protein (159 aa).

Asp-128 is a catalytic residue.

It belongs to the MoaC family.

Its pathway is cofactor biosynthesis; molybdopterin biosynthesis. Functionally, together with MoaA, is involved in the conversion of 5'-GTP to cyclic pyranopterin monophosphate (cPMP or molybdopterin precursor Z). The chain is Probable cyclic pyranopterin monophosphate synthase accessory protein from Methanothermobacter thermautotrophicus (strain ATCC 29096 / DSM 1053 / JCM 10044 / NBRC 100330 / Delta H) (Methanobacterium thermoautotrophicum).